Here is a 287-residue protein sequence, read N- to C-terminus: Eukaryotic translation initiation factor 3 subunit F (287 aa).

Residues 12–142 (VRVHPVVLFQ…IKAYVCVSLG (131 aa)) enclose the MPN domain.

This sequence belongs to the eIF-3 subunit F family. Component of the eukaryotic translation initiation factor 3 (eIF-3) complex.

It is found in the cytoplasm. In terms of biological role, component of the eukaryotic translation initiation factor 3 (eIF-3) complex, which is involved in protein synthesis of a specialized repertoire of mRNAs and, together with other initiation factors, stimulates binding of mRNA and methionyl-tRNAi to the 40S ribosome. The eIF-3 complex specifically targets and initiates translation of a subset of mRNAs involved in cell proliferation. The sequence is that of Eukaryotic translation initiation factor 3 subunit F from Aedes aegypti (Yellowfever mosquito).